The primary structure comprises 239 residues: Ribitol-5-phosphate cytidylyltransferase (239 aa).

CTP contacts are provided by residues 7–10 (FAGG) and 80–86 (GETGQMS).

Belongs to the IspD/TarI cytidylyltransferase family. TarI subfamily.

It catalyses the reaction D-ribitol 5-phosphate + CTP + H(+) = CDP-L-ribitol + diphosphate. It functions in the pathway cell wall biogenesis; poly(ribitol phosphate) teichoic acid biosynthesis. In terms of biological role, catalyzes the transfer of the cytidylyl group of CTP to D-ribitol 5-phosphate. The protein is Ribitol-5-phosphate cytidylyltransferase of Streptococcus agalactiae serotype Ia (strain ATCC 27591 / A909 / CDC SS700).